Here is a 973-residue protein sequence, read N- to C-terminus: Protein HypA (973 aa).

The polypeptide is Protein HypA (hypA) (Clostridium perfringens (strain 13 / Type A)).